The chain runs to 463 residues: ATP synthase subunit beta (463 aa).

153 to 160 provides a ligand contact to ATP; that stretch reads GGAGVGKT.

The protein belongs to the ATPase alpha/beta chains family. As to quaternary structure, F-type ATPases have 2 components, CF(1) - the catalytic core - and CF(0) - the membrane proton channel. CF(1) has five subunits: alpha(3), beta(3), gamma(1), delta(1), epsilon(1). CF(0) has three main subunits: a(1), b(2) and c(9-12). The alpha and beta chains form an alternating ring which encloses part of the gamma chain. CF(1) is attached to CF(0) by a central stalk formed by the gamma and epsilon chains, while a peripheral stalk is formed by the delta and b chains.

It localises to the cell inner membrane. The enzyme catalyses ATP + H2O + 4 H(+)(in) = ADP + phosphate + 5 H(+)(out). Produces ATP from ADP in the presence of a proton gradient across the membrane. The catalytic sites are hosted primarily by the beta subunits. This Burkholderia cepacia (Pseudomonas cepacia) protein is ATP synthase subunit beta.